The following is a 556-amino-acid chain: Pumilio homolog 11 (556 aa).

Residues 215–556 (GGSRELDGSA…RIFSKNLWKK (342 aa)) form the PUM-HD domain. Pumilio repeat units follow at residues 238–276 (SMVDSYGSVYLMAKDQLGCRLLQKFVDEGNFVDVMIIFK), 277–313 (EVINNVIELGTDPFGNYLIQKLIEVCNEEQRTQILIR), 316–351 (SKPGLLVKISINNYGTRVVQKLIETVTTKEQISLVK), 353–388 (ALVPGFLSLFRELNGNHVILNCLKFFSPNDNKFILE), 389–424 (AATKFCIEIATTRHGCCVLQRCVSYSVGEQHEKLVD), 425–459 (EISRNSLLLAQDPFGNYLVQYIIEKKVGGVNVLFE), 460–495 (LRGNYVKLATQKFGSHVVEKCLRYYPESRSQIVNEL), and 496–531 (VSVLNFGYLLQDPYANYVIQCALSKTKGFVRASLVE).

The protein resides in the cytoplasm. In terms of biological role, sequence-specific RNA-binding protein that regulates translation and mRNA stability by binding the 3'-UTR of target mRNAs. The protein is Pumilio homolog 11 (APUM11) of Arabidopsis thaliana (Mouse-ear cress).